Consider the following 165-residue polypeptide: Disulfide bond formation protein B (165 aa).

Residues Met-1–Ser-16 lie on the Cytoplasmic side of the membrane. A helical membrane pass occupies residues Trp-17–Tyr-33. Topologically, residues Phe-34–Val-51 are periplasmic. An intrachain disulfide couples Cys-43 to Cys-46. The helical transmembrane segment at Ala-52–Pro-67 threads the bilayer. Residues Asn-68–Trp-74 lie on the Cytoplasmic side of the membrane. Residues Leu-75–Gln-92 form a helical membrane-spanning segment. Residues Gln-93–Gln-147 lie on the Periplasmic side of the membrane. Residues Cys-107 and Cys-133 are joined by a disulfide bond. The helical transmembrane segment at Trp-148–Ile-165 threads the bilayer.

It belongs to the DsbB family.

The protein localises to the cell inner membrane. In terms of biological role, required for disulfide bond formation in some periplasmic proteins. Acts by oxidizing the DsbA protein. The chain is Disulfide bond formation protein B from Vibrio alginolyticus.